Here is a 352-residue protein sequence, read N- to C-terminus: Endoplasmic reticulum GDP-fucose transporter (352 aa).

10 consecutive transmembrane segments (helical) span residues 9 to 29 (LGML…ELII), 34 to 54 (GAGN…GLVF), 70 to 90 (YVIL…AFNF), 96 to 116 (LHMI…IVLL), 126 to 146 (SSVA…SGDV), 163 to 183 (FFWW…TAYM), 201 to 221 (ALFF…GNIV), 249 to 271 (LMLF…VYVL), 276 to 298 (ASLT…SIIY), and 305 to 325 (LNHW…ANVI). A Prevents secretion from ER motif is present at residues 350 to 352 (KVE).

Belongs to the nucleotide-sugar transporter family. SLC35B subfamily.

It localises to the endoplasmic reticulum membrane. Its function is as follows. Sugar transporter that specifically mediates the transport of UDP-N-acetylglucosamine (UDP-GlcNAc), GDP-fucose and UDP-xylose. Functions redundantly with Gfr in the O-fucosylation of Notch, positively regulating Notch signaling. Involved in the biosynthesis of heparan sulfate-glycosaminoglycan (HS-GAG) and in Dpp signaling in the wing imaginal disk. This Drosophila melanogaster (Fruit fly) protein is Endoplasmic reticulum GDP-fucose transporter.